Reading from the N-terminus, the 569-residue chain is Protein misato homolog 1 (569 aa).

A phosphoserine mark is found at Ser-41 and Ser-495.

The protein belongs to the misato family.

The protein localises to the mitochondrion outer membrane. Its subcellular location is the cytoplasm. Involved in the regulation of mitochondrial distribution and morphology. Required for mitochondrial fusion and mitochondrial network formation. This chain is Protein misato homolog 1 (MSTO1), found in Macaca fascicularis (Crab-eating macaque).